The sequence spans 273 residues: Pantothenate synthetase (273 aa).

27–34 provides a ligand contact to ATP; the sequence is MGALHNGH. The Proton donor role is filled by His34. Gln58 lines the (R)-pantoate pocket. Gln58 contacts beta-alanine. 144-147 provides a ligand contact to ATP; the sequence is GKKD. Residue Gln150 participates in (R)-pantoate binding. ATP contacts are provided by residues Val173 and 181-184; that span reads LSSR.

Belongs to the pantothenate synthetase family. Homodimer.

It localises to the cytoplasm. It carries out the reaction (R)-pantoate + beta-alanine + ATP = (R)-pantothenate + AMP + diphosphate + H(+). The protein operates within cofactor biosynthesis; (R)-pantothenate biosynthesis; (R)-pantothenate from (R)-pantoate and beta-alanine: step 1/1. In terms of biological role, catalyzes the condensation of pantoate with beta-alanine in an ATP-dependent reaction via a pantoyl-adenylate intermediate. This is Pantothenate synthetase from Campylobacter fetus subsp. fetus (strain 82-40).